The sequence spans 270 residues: 3-methyl-2-oxobutanoate hydroxymethyltransferase (270 aa).

The Mg(2+) site is built by aspartate 53 and aspartate 92. Residues 53-54 (DS), aspartate 92, and lysine 120 contribute to the 3-methyl-2-oxobutanoate site. Residue glutamate 122 participates in Mg(2+) binding. Glutamate 189 acts as the Proton acceptor in catalysis.

The protein belongs to the PanB family. As to quaternary structure, homodecamer; pentamer of dimers. Requires Mg(2+) as cofactor.

It is found in the cytoplasm. The catalysed reaction is 3-methyl-2-oxobutanoate + (6R)-5,10-methylene-5,6,7,8-tetrahydrofolate + H2O = 2-dehydropantoate + (6S)-5,6,7,8-tetrahydrofolate. Its pathway is cofactor biosynthesis; (R)-pantothenate biosynthesis; (R)-pantoate from 3-methyl-2-oxobutanoate: step 1/2. Functionally, catalyzes the reversible reaction in which hydroxymethyl group from 5,10-methylenetetrahydrofolate is transferred onto alpha-ketoisovalerate to form ketopantoate. This is 3-methyl-2-oxobutanoate hydroxymethyltransferase from Saccharophagus degradans (strain 2-40 / ATCC 43961 / DSM 17024).